The chain runs to 533 residues: MQLHISPSMRSITISSSNEFIDLMKIKVAARHISYRTLFHTILILAFLLPFVFILTAVVTLEGVNKCSSFDCFGRRLGPRLLGRIDDSEQRLVRDFYKILNEVSTQEIPDGLKLPESFSQLVSDMKNNHYDAKTFALVFRAMVEKFERDLRESKFAELMNKHFAASSIPKGIHCLSLRLTDEYSSNAHARRQLPSPELLPVLSDNAYHHFVLATDNILAASVVVSSAVQSSSKPEKIVFHVITDKKTYAGMHSWFALNSVAPAIVEVKSVHQFDWLTRENVPVLEAVESHNSIRNYYHGNHIAGANLSETTPRTFASKLQSRSPKYISLLNHLRIYLPELFPNLDKVVFLDDDIVIQKDLSPLWDIDLNGKVNGAVETCRGEDVWVMSKRLRNYFNFSHPLIAKHLDPEECAWAYGMNIFDLRTWRKTNIRETYHSWLKENLKSNLTMWKLGTLPPALIAFKGHVQPIDSSWHMLGLGYQSKTNLENAKKAAVIHYNGQSKPWLEIGFEHLRPFWTKYVNYSNDFIKNCHILE.

Residues M1–H40 are Cytoplasmic-facing. The chain crosses the membrane as a helical; Signal-anchor for type II membrane protein span at residues T41–L61. Topologically, residues E62–E533 are lumenal. N-linked (GlcNAc...) asparagine glycosylation is found at N306, N396, N445, and N520.

Belongs to the glycosyltransferase 8 family. As to expression, expressed in roots, inflorescences, siliques, leaves and stems. Accumulates in pollen grains.

The protein resides in the golgi apparatus membrane. The protein operates within glycan metabolism; pectin biosynthesis. May be involved in pectin and/or xylans biosynthesis in cell walls. Together with GAUT14, required for pollen tube growth, possibly through the regulation of pectin biosynthesis and repartition in the pollen tube wall. The chain is Probable galacturonosyltransferase 13 from Arabidopsis thaliana (Mouse-ear cress).